The following is a 578-amino-acid chain: Alpha-(1,6)-fucosyltransferase (578 aa).

Residues 1–9 (MRPWTGSWR) lie on the Cytoplasmic side of the membrane. A helical; Signal-anchor for type II membrane protein membrane pass occupies residues 10-30 (WIMLILFAWGTLLFYIGGHLV). The Lumenal segment spans residues 31–578 (RDNENPDHSS…KYPTYQEAEK (548 aa)). Cystine bridges form between C207–C269, C215–C233, and C221–C225. The 288-residue stretch at 209–496 (KAKKLVCNIN…PDASAHFHSL (288 aa)) folds into the GT23 domain. Residues 302 to 308 (PRPPYLP) carry the SH3-binding motif. Residues 368 to 369 (RR) are important for donor substrate binding. Residues C468 and C475 are joined by a disulfide bond. The region spanning 505–566 (QNAHNQLAIY…PSYKVKEKIE (62 aa)) is the SH3 domain.

The protein belongs to the glycosyltransferase 23 family.

Its subcellular location is the golgi apparatus. The protein localises to the golgi stack membrane. The catalysed reaction is N(4)-{beta-D-GlcNAc-(1-&gt;2)-alpha-D-Man-(1-&gt;3)-[beta-D-GlcNAc-(1-&gt;2)-alpha-D-Man-(1-&gt;6)]-beta-D-Man-(1-&gt;4)-beta-D-GlcNAc-(1-&gt;4)-beta-D-GlcNAc}-L-asparaginyl-[protein] + GDP-beta-L-fucose = an N(4)-{beta-D-GlcNAc-(1-&gt;2)-alpha-D-Man-(1-&gt;3)-[beta-D-GlcNAc-(1-&gt;2)-alpha-D-Man-(1-&gt;6)]-beta-D-Man-(1-&gt;4)-beta-D-GlcNAc-(1-&gt;4)-[alpha-L-Fuc-(1-&gt;6)]-beta-D-GlcNAc}-L-asparaginyl-[protein] + GDP + H(+). It participates in protein modification; protein glycosylation. Its function is as follows. Catalyzes the addition of fucose in alpha 1-6 linkage to the first GlcNAc residue, next to the peptide chains in N-glycans. In Xenopus tropicalis (Western clawed frog), this protein is Alpha-(1,6)-fucosyltransferase (fut8).